The sequence spans 245 residues: Adenosylcobinamide-GDP ribazoletransferase (245 aa).

The next 6 membrane-spanning stretches (helical) occupy residues 35–55, 108–128, 137–157, 176–196, 197–217, and 222–242; these read WFPL…ALGL, IGAF…IGAH, GVLI…AALV, IAIG…TPVM, TTVT…HLAR, and INGD…LLAA.

It belongs to the CobS family. The cofactor is Mg(2+).

It localises to the cell inner membrane. It catalyses the reaction alpha-ribazole + adenosylcob(III)inamide-GDP = adenosylcob(III)alamin + GMP + H(+). The enzyme catalyses alpha-ribazole 5'-phosphate + adenosylcob(III)inamide-GDP = adenosylcob(III)alamin 5'-phosphate + GMP + H(+). The protein operates within cofactor biosynthesis; adenosylcobalamin biosynthesis; adenosylcobalamin from cob(II)yrinate a,c-diamide: step 7/7. Its function is as follows. Joins adenosylcobinamide-GDP and alpha-ribazole to generate adenosylcobalamin (Ado-cobalamin). Also synthesizes adenosylcobalamin 5'-phosphate from adenosylcobinamide-GDP and alpha-ribazole 5'-phosphate. This chain is Adenosylcobinamide-GDP ribazoletransferase, found in Nitratidesulfovibrio vulgaris (strain DP4) (Desulfovibrio vulgaris).